A 318-amino-acid polypeptide reads, in one-letter code: D-alanine--D-alanine ligase B (318 aa).

Residues 116 to 311 form the ATP-grasp domain; the sequence is KQVWQSLGIP…FQQLVLAILA (196 aa). 142 to 197 serves as a coordination point for ATP; that stretch reads STELGFPLIVKPAHEGSSIGMAKVNSTQELVAAWQDAAKYDSQVLVEQWIHGPEFT. Mg(2+) is bound by residues Asp265, Glu278, and Asn280.

This sequence belongs to the D-alanine--D-alanine ligase family. The cofactor is Mg(2+). Requires Mn(2+) as cofactor.

The protein localises to the cytoplasm. It carries out the reaction 2 D-alanine + ATP = D-alanyl-D-alanine + ADP + phosphate + H(+). Its pathway is cell wall biogenesis; peptidoglycan biosynthesis. Cell wall formation. In Pseudomonas putida (strain ATCC 47054 / DSM 6125 / CFBP 8728 / NCIMB 11950 / KT2440), this protein is D-alanine--D-alanine ligase B.